We begin with the raw amino-acid sequence, 62 residues long: Photosystem II reaction center protein Z (62 aa).

The next 2 membrane-spanning stretches (helical) occupy residues 8-28 (AVFALIITSSILLISVPVVFA) and 41-61 (FSGTSLWIGLVFLVGILNSLI).

It belongs to the PsbZ family. PSII is composed of 1 copy each of membrane proteins PsbA, PsbB, PsbC, PsbD, PsbE, PsbF, PsbH, PsbI, PsbJ, PsbK, PsbL, PsbM, PsbT, PsbY, PsbZ, Psb30/Ycf12, at least 3 peripheral proteins of the oxygen-evolving complex and a large number of cofactors. It forms dimeric complexes.

It is found in the plastid. Its subcellular location is the chloroplast thylakoid membrane. In terms of biological role, may control the interaction of photosystem II (PSII) cores with the light-harvesting antenna, regulates electron flow through the 2 photosystem reaction centers. PSII is a light-driven water plastoquinone oxidoreductase, using light energy to abstract electrons from H(2)O, generating a proton gradient subsequently used for ATP formation. This Arabidopsis thaliana (Mouse-ear cress) protein is Photosystem II reaction center protein Z.